The chain runs to 223 residues: Adenylate kinase 4, mitochondrial (223 aa).

Position 15 to 20 (Gly-15 to Thr-20) interacts with a ribonucleoside 5'-triphosphate. The interval Ser-35 to Val-64 is NMP. Residues Ser-36 and Arg-41 each coordinate AMP. Lys-60 is subject to N6-succinyllysine. Residues Leu-62–Val-64, Gly-89–Arg-92, and Gln-96 contribute to the AMP site. Residues Arg-125–Asp-162 are LID. Residues Arg-126 and Val-135–Tyr-136 contribute to the a ribonucleoside 5'-triphosphate site. Residue Arg-170 coordinates AMP. Position 175 is an N6-acetyllysine (Lys-175). Lys-179 and Lys-186 each carry N6-acetyllysine; alternate. 2 positions are modified to N6-succinyllysine; alternate: Lys-179 and Lys-186. A ribonucleoside 5'-triphosphate is bound at residue Thr-199.

Belongs to the adenylate kinase family. AK3 subfamily. As to quaternary structure, monomer. Interacts with SLC25A5/ANT2. In terms of tissue distribution, highly expressed in kidney, moderately expressed in heart and liver and weakly expressed in brain.

It localises to the mitochondrion matrix. It catalyses the reaction a ribonucleoside 5'-phosphate + ATP = a ribonucleoside 5'-diphosphate + ADP. The catalysed reaction is AMP + ATP = 2 ADP. It carries out the reaction GTP + AMP = GDP + ADP. The enzyme catalyses CMP + ATP = CDP + ADP. It catalyses the reaction GTP + CMP = CDP + GDP. The catalysed reaction is dAMP + ATP = dADP + ADP. It carries out the reaction dCMP + ATP = dCDP + ADP. The enzyme catalyses a 2'-deoxyribonucleoside 5'-diphosphate + ATP = a 2'-deoxyribonucleoside 5'-triphosphate + ADP. It catalyses the reaction a ribonucleoside 5'-diphosphate + ATP = a ribonucleoside 5'-triphosphate + ADP. The catalysed reaction is GDP + ATP = GTP + ADP. It carries out the reaction CDP + GTP = CTP + GDP. The enzyme catalyses CDP + ATP = CTP + ADP. It catalyses the reaction UDP + ATP = UTP + ADP. The catalysed reaction is GTP + UDP = UTP + GDP. It carries out the reaction dADP + GTP = dATP + GDP. The enzyme catalyses dCDP + GTP = dCTP + GDP. It catalyses the reaction dCDP + ATP = dCTP + ADP. The catalysed reaction is dGDP + ATP = dGTP + ADP. It carries out the reaction dTDP + GTP = dTTP + GDP. The enzyme catalyses dTDP + ATP = dTTP + ADP. Broad-specificity mitochondrial nucleoside phosphate kinase involved in cellular nucleotide homeostasis by catalyzing nucleoside-phosphate interconversions. Similar to other adenylate kinases, preferentially catalyzes the phosphorylation of the nucleoside monophosphate AMP with ATP as phosphate donor to produce ADP. Phosphorylates only AMP when using GTP as phosphate donor. In vitro, can also catalyze the phosphorylation of CMP, dAMP and dCMP and use GTP as an alternate phosphate donor. Moreover, exhibits a diphosphate kinase activity, producing ATP, CTP, GTP, UTP, TTP, dATP, dCTP and dGTP from the corresponding diphosphate substrates with either ATP or GTP as phosphate donors. Plays a role in controlling cellular ATP levels by regulating phosphorylation and activation of the energy sensor protein kinase AMPK. Plays a protective role in the cellular response to oxidative stress. This Homo sapiens (Human) protein is Adenylate kinase 4, mitochondrial.